Consider the following 275-residue polypeptide: 4-diphosphocytidyl-2-C-methyl-D-erythritol kinase (275 aa).

The active site involves lysine 14. 94 to 104 (PMEAGLGGGSA) serves as a coordination point for ATP. Aspartate 134 is an active-site residue.

It belongs to the GHMP kinase family. IspE subfamily.

It catalyses the reaction 4-CDP-2-C-methyl-D-erythritol + ATP = 4-CDP-2-C-methyl-D-erythritol 2-phosphate + ADP + H(+). Its pathway is isoprenoid biosynthesis; isopentenyl diphosphate biosynthesis via DXP pathway; isopentenyl diphosphate from 1-deoxy-D-xylulose 5-phosphate: step 3/6. Catalyzes the phosphorylation of the position 2 hydroxy group of 4-diphosphocytidyl-2C-methyl-D-erythritol. The sequence is that of 4-diphosphocytidyl-2-C-methyl-D-erythritol kinase from Thermosipho africanus (strain TCF52B).